Here is a 376-residue protein sequence, read N- to C-terminus: MFNPHALDVPAVIFDNGSGLCKAGLSGEIGPRHVISSVLGHCKFNVPLARLNQKYFVGQEALYKYEALHLHYPIERGLVTGWDDMEKLWKHLFERELGVKPSQQPVLMTEPSLNPREIREKLAEMMFETFSVPGFYLSNHAVAALYASACVTGLVVDSGDGVTCTVPIFEGYSLPHAVTKLCMAGRDITEHLTRLLFASGFNFPCILNKAVVNNIKEKLCYIALEPEKELRKSRGEVLGAYRLPDGHVIHFGDELYQVPEVLFAPDQLGIHSPGLSKMVSSSIMKCDTDIQNKLYADIVLSGGTTLLPGLEERLMKEVEQLASKGTPIKITASPDRCFSAWIGASIMTSMSSFKQMWVTSADFKEYGTSVVQRRCF.

Belongs to the actin family. As to expression, in skin, expressed in the basal, spinous and granular layers of the epidermis. Also expressed in hair follicles, sebaceaous glands, eccrine sweat glands and semen.

The protein localises to the cytoplasm. The protein resides in the cytoskeleton. Its subcellular location is the nucleus. It localises to the cytoplasmic vesicle. It is found in the secretory vesicle. The protein localises to the acrosome. Its function is as follows. Negatively regulates the Hedgehog (SHH) signaling. Binds to the promoter of the SHH signaling mediator, GLI1, and inhibits its expression. The chain is Actin-related protein T1 from Homo sapiens (Human).